A 417-amino-acid chain; its full sequence is Putative competence-damage inducible protein (417 aa).

It belongs to the CinA family.

The chain is Putative competence-damage inducible protein from Shouchella clausii (strain KSM-K16) (Alkalihalobacillus clausii).